A 311-amino-acid chain; its full sequence is Putative ankyrin repeat protein RF_0923 (311 aa).

ANK repeat units lie at residues 42 to 71, 77 to 106, 112 to 141, 147 to 176, and 182 to 213; these read IDNT…EQAI, NGNT…PQAI, NGNT…EQAI, and KGCT…AINH.

In Rickettsia felis (strain ATCC VR-1525 / URRWXCal2) (Rickettsia azadi), this protein is Putative ankyrin repeat protein RF_0923.